Consider the following 348-residue polypeptide: Ricin B-like lectin R40C1 (348 aa).

The segment at 1 to 26 (MFGFGHHGHHGQDQPPQHHGGGGGGA) is disordered. Residues 199–345 (TVRIFCKADE…CEGDNQRWKI (147 aa)) form the Ricin B-type lectin domain.

As to expression, expressed in roots and shoots.

Lectin which binds carbohydrates in vitro. Interacts through its lectin domain with glycan structures containing specific motifs. The protein is Ricin B-like lectin R40C1 of Oryza sativa subsp. japonica (Rice).